Here is a 429-residue protein sequence, read N- to C-terminus: MHVQSQASSDDFFLQGVGSADPAVAEILAGELKRQQDQIELIASENIVSKAVLDAQGSVLTNKYAEGYPGKRYYGGCEVVDEVERLAIERAKQLFGCEHANVQPHSGSQANQAVFMVTMTPGDTFMGMNLDHGGHLTHGKSVNQSGKWFSPVAYGVRAQDHLIDYDEAYEVAKANNPKVIIAGGSAYSRHIDFKKFREIADEVGAILMCDVAHYAGLIVAGEYPNPFPHAHIVTTTTHKTLRGPRGGMILTNDKKLAKKIDSAVFPGLQGGPLMHVIAAKAVAFGEALKPEFKQYARQVIENARALAESLQSVGFKIVSNGTDSHLMLVDLTPKGVSGADAEIALERAGITTNKNSIPGDPLPPMQTSGLRVGTPAGTTRGFGPGEFRQVGKWIGEVLDAVASGEDPTPVEQKVRGEVLALTKRFPIYS.

(6S)-5,6,7,8-tetrahydrofolate-binding positions include Leu130 and 134–136; that span reads GHL. Lys239 bears the N6-(pyridoxal phosphate)lysine mark.

This sequence belongs to the SHMT family. Homodimer. It depends on pyridoxal 5'-phosphate as a cofactor.

It localises to the cytoplasm. The catalysed reaction is (6R)-5,10-methylene-5,6,7,8-tetrahydrofolate + glycine + H2O = (6S)-5,6,7,8-tetrahydrofolate + L-serine. The protein operates within one-carbon metabolism; tetrahydrofolate interconversion. Its pathway is amino-acid biosynthesis; glycine biosynthesis; glycine from L-serine: step 1/1. In terms of biological role, catalyzes the reversible interconversion of serine and glycine with tetrahydrofolate (THF) serving as the one-carbon carrier. This reaction serves as the major source of one-carbon groups required for the biosynthesis of purines, thymidylate, methionine, and other important biomolecules. Also exhibits THF-independent aldolase activity toward beta-hydroxyamino acids, producing glycine and aldehydes, via a retro-aldol mechanism. The chain is Serine hydroxymethyltransferase from Phenylobacterium zucineum (strain HLK1).